The primary structure comprises 1342 residues: DNA-directed RNA polymerase subunit beta (1342 aa).

An N6-acetyllysine mark is found at lysine 1022 and lysine 1200.

It belongs to the RNA polymerase beta chain family. As to quaternary structure, the RNAP catalytic core consists of 2 alpha, 1 beta, 1 beta' and 1 omega subunit. When a sigma factor is associated with the core the holoenzyme is formed, which can initiate transcription.

The catalysed reaction is RNA(n) + a ribonucleoside 5'-triphosphate = RNA(n+1) + diphosphate. In terms of biological role, DNA-dependent RNA polymerase catalyzes the transcription of DNA into RNA using the four ribonucleoside triphosphates as substrates. The polypeptide is DNA-directed RNA polymerase subunit beta (Escherichia fergusonii (strain ATCC 35469 / DSM 13698 / CCUG 18766 / IAM 14443 / JCM 21226 / LMG 7866 / NBRC 102419 / NCTC 12128 / CDC 0568-73)).